The primary structure comprises 419 residues: MNQEDNTGGGGIFGLFKWTKDALFGTDISPSMKYKDQEERRDRSRYAQDDTNFSMKFGNDSNRRSTNLSRSNSWSGLDSTLHRKYELLPEYNENGFNSIVNGDHHSKERIRSLRSPAPIVPREPLRNEPTDTFGHRLHTKRRTINELSNSQIPFIPPQEDDPLLSKLFNKDGVNEVRRSPYKLSVKDIPGKFPSPLTKRDEIDNYYVRDEDACHKNREYKKAYFDLFAQMDLNSRDLEDLCEDVREQREQFHRNEQTYKQAYEEMRAELVNELKKSKTLFENYYSLGQKYKSLKKVLDQTISHEAELATSRERLYQEEDLKNFEIQTLKQRLSDLELKYTNLQIEKDMQRDNYESEIHDLLLQLSLRNNERKDTSAGSNIFSTGQYDRTPFHNGNNSYDSNSHSWDTDYLKNIDGFIER.

At serine 29 the chain carries Phosphoserine. Residues tyrosine 34–glutamine 48 show a composition bias toward basic and acidic residues. The tract at residues tyrosine 34–glycine 76 is disordered. Residues arginine 64–serine 75 show a composition bias toward low complexity. Phosphoserine occurs at positions 73 and 115. Positions glutamine 229–serine 355 form a coiled coil.

It belongs to the BBP1 family. As to quaternary structure, homodimer. Interacts with KAR1, MPS2 and SPC29.

It is found in the cytoplasm. It localises to the cytoskeleton. The protein resides in the microtubule organizing center. The protein localises to the spindle pole body. Its function is as follows. Component of the spindle pole body (SPB) required for insertion of the nascent SPB into the nuclear envelope and for the proper execution of spindle pole body (SPB) duplication. Connects the central plaque of the SPB with the half-bridge. Required for proper localization of CDC5 at the SPB and for proper M-phase progression. This chain is Spindle pole component BBP1 (BBP1), found in Saccharomyces cerevisiae (strain RM11-1a) (Baker's yeast).